The sequence spans 293 residues: Protease HtpX homolog (293 aa).

2 consecutive transmembrane segments (helical) span residues 5 to 25 (IFLFIVTNLAILLMLSITLRL) and 43 to 63 (ALLVFSAVLGFGGSLISLAMS). His-148 provides a ligand contact to Zn(2+). The active site involves Glu-149. His-152 serves as a coordination point for Zn(2+). Helical transmembrane passes span 159-179 (VTLALIQGVVNTFVIFLSRII) and 199-219 (FVTSLIAQMVLGILATIIVMW). Position 225 (Glu-225) interacts with Zn(2+).

Belongs to the peptidase M48B family. Zn(2+) serves as cofactor.

The protein localises to the cell inner membrane. This is Protease HtpX homolog from Nitrosomonas europaea (strain ATCC 19718 / CIP 103999 / KCTC 2705 / NBRC 14298).